Here is a 434-residue protein sequence, read N- to C-terminus: Glycylpeptide N-tetradecanoyltransferase 1 (434 aa).

The disordered stretch occupies residues 1–24 (MADNNSPPGSVEQKADQIVEANPL). Residue Ala2 is modified to N-acetylalanine. Tetradecanoyl-CoA-binding positions include 48 to 51 (HKFW), 184 to 186 (LCV), and 192 to 196 (SKRLA). Leu434 serves as the catalytic Proton acceptor; via carboxylate.

The protein belongs to the NMT family. As to expression, expressed ubiquitously, with higher levels in young tissues (at protein level).

The protein localises to the cytoplasm. The catalysed reaction is N-terminal glycyl-[protein] + tetradecanoyl-CoA = N-tetradecanoylglycyl-[protein] + CoA + H(+). Adds a myristoyl group to the N-terminal glycine residue of certain cellular proteins. Can also use decanoyl-CoA and lauroyl-CoA as substrates. In Arabidopsis thaliana (Mouse-ear cress), this protein is Glycylpeptide N-tetradecanoyltransferase 1 (NMT1).